Here is a 151-residue protein sequence, read N- to C-terminus: Ribonuclease H (151 aa).

Residues 1–143 (MSDVVVIHTD…ADVLATRGLQ (143 aa)) form the RNase H type-1 domain. Residues D10, E49, D71, and D135 each contribute to the Mg(2+) site.

It belongs to the RNase H family. In terms of assembly, monomer. Mg(2+) serves as cofactor.

It is found in the cytoplasm. It carries out the reaction Endonucleolytic cleavage to 5'-phosphomonoester.. Endonuclease that specifically degrades the RNA of RNA-DNA hybrids. This is Ribonuclease H from Mycolicibacterium gilvum (strain PYR-GCK) (Mycobacterium gilvum (strain PYR-GCK)).